Consider the following 223-residue polypeptide: Glutathione S-transferase A1 (223 aa).

N-acetylmethionine is present on M1. A2 bears the N-acetylalanine; in Glutathione S-transferase A1, N-terminally processed mark. The 81-residue stretch at 3–83 (GKPVLHYFNA…YIATKYDLYG (81 aa)) folds into the GST N-terminal domain. Residue K4 is modified to N6-succinyllysine. Residues Y9, K45, 54 to 55 (QV), and 67 to 68 (QT) each bind glutathione. The GST C-terminal domain maps to 85-208 (DMKERALIDM…QPGSQRKPPM (124 aa)).

This sequence belongs to the GST superfamily. Alpha family. Homodimer. Expressed in the liver, skin and kidney.

The enzyme catalyses RX + glutathione = an S-substituted glutathione + a halide anion + H(+). The catalysed reaction is prostaglandin A2 + glutathione = prostaglandin A2-S-(R)-glutathione. It carries out the reaction prostaglandin J2 + glutathione = prostaglandin J2-S-(R)-glutathione. It catalyses the reaction (13S)-hydroperoxy-(9Z,11E)-octadecadienoate + 2 glutathione = (13S)-hydroxy-(9Z,11E)-octadecadienoate + glutathione disulfide + H2O. The enzyme catalyses androst-5-ene-3,17-dione = androst-4-ene-3,17-dione. Its function is as follows. Glutathione S-transferase that catalyzes the nucleophilic attack of the sulfur atom of glutathione on the electrophilic groups of a wide range of exogenous and endogenous compounds. Involved in the formation of glutathione conjugates of both prostaglandin A2 (PGA2) and prostaglandin J2 (PGJ2). It also catalyzes the isomerization of D5-androstene-3,17-dione (AD) into D4-androstene-3,17-dione and may therefore play an important role in hormone biosynthesis. Through its glutathione-dependent peroxidase activity toward the fatty acid hydroperoxide (13S)-hydroperoxy-(9Z,11E)-octadecadienoate/13-HPODE it is also involved in the metabolism of oxidized linoleic acid. This is Glutathione S-transferase A1 (Gsta1) from Mus musculus (Mouse).